A 122-amino-acid chain; its full sequence is Small ribosomal subunit protein uS10y (122 aa).

This sequence belongs to the universal ribosomal protein uS10 family.

The protein is Small ribosomal subunit protein uS10y (RPS20B) of Arabidopsis thaliana (Mouse-ear cress).